The sequence spans 392 residues: uncharacterized protein (392 aa).

It belongs to the ROK (NagC/XylR) family.

This is an uncharacterized protein from Sinorhizobium fredii (strain NBRC 101917 / NGR234).